We begin with the raw amino-acid sequence, 366 residues long: GTP cyclohydrolase 1 type 2 homolog (366 aa).

Zn(2+) is bound by residues H64, H65, D102, H326, and E329.

Belongs to the GTP cyclohydrolase I type 2/NIF3 family. In terms of assembly, toroid-shaped homohexamer that has a central cavity of about 38 Angstroms diameter.

The polypeptide is GTP cyclohydrolase 1 type 2 homolog (Staphylococcus aureus (strain Mu50 / ATCC 700699)).